Here is a 217-residue protein sequence, read N- to C-terminus: Monomethylamine corrinoid protein 2 (217 aa).

A B12-binding N-terminal domain is found at 1-91; it reads MTNTEIFEKL…ELEKSKVEGE (91 aa). The B12-binding domain maps to 93 to 217; that stretch reads TGLAITFVAE…AAKVALNIMK (125 aa). Residue histidine 106 coordinates methylcob(III)alamin.

The protein belongs to the methylamine corrinoid protein family. In terms of assembly, can form a complex with MtmB.

It participates in one-carbon metabolism; methanogenesis from methylamine. Its function is as follows. Acts as a methyl group carrier between MtmB and MtbA. This chain is Monomethylamine corrinoid protein 2 (mtmC2), found in Methanosarcina acetivorans (strain ATCC 35395 / DSM 2834 / JCM 12185 / C2A).